The following is a 1344-amino-acid chain: Myb-binding protein 1A (1344 aa).

The tract at residues 1–24 (MAEMKSPTKAEPASPAEAPQGDRR) is disordered. The residue at position 2 (alanine 2) is an N-acetylalanine. The interaction with MYB stretch occupies residues 2-580 (AEMKSPTKAE…WDQMMSTLKE (579 aa)). Residue serine 14 is modified to Phosphoserine. N6-acetyllysine occurs at positions 69 and 156. 2 consecutive short sequence motifs (nuclear export signal) follow at residues 238-256 (SEDN…ANSV) and 261-279 (KLPD…ENKF). Disordered stretches follow at residues 696-752 (NEDE…DVDP) and 1150-1344 (PKSE…VQTP). The segment covering 708 to 730 (TDEKQLKHGEDADSDSEDSKNSE) has biased composition (basic and acidic residues). The segment covering 731 to 746 (SDVDSEDGEESEEEDR) has biased composition (acidic residues). A compositionally biased stretch (basic and acidic residues) spans 1150-1161 (PKSEKKNVKDIP). A Glycyl lysine isopeptide (Lys-Gly) (interchain with G-Cter in SUMO2) cross-link involves residue lysine 1151. The tract at residues 1154 to 1344 (KKNVKDIPSD…RVARRRVQTP (191 aa)) is required for nuclear and nucleolar localization. Phosphoserine is present on residues serine 1162 and serine 1166. The segment covering 1170 to 1187 (TKRKKKGFLPETKKRKKL) has biased composition (basic residues). Position 1189 is a phosphoserine (serine 1189). Threonine 1193 carries the post-translational modification Phosphothreonine. Phosphoserine is present on residues serine 1221 and serine 1246. Over residues 1247 to 1256 (PAPNNPTLSP) the composition is skewed to low complexity. Position 1253 is a phosphothreonine (threonine 1253). Serine 1255 is modified (phosphoserine). A phosphothreonine mark is found at threonine 1258 and threonine 1280. A phosphoserine mark is found at serine 1283, serine 1305, and serine 1318. Residues 1301–1316 (VKRRSSQSALPKKRAR) are compositionally biased toward basic residues. Low complexity predominate over residues 1317 to 1329 (LSLVSRSPSLLQS). At arginine 1322 the chain carries Citrulline. Phosphoserine is present on residues serine 1323, serine 1325, and serine 1329. A compositionally biased stretch (basic residues) spans 1331–1344 (IRKRRVARRRVQTP).

The protein belongs to the MYBBP1A family. Binds to and represses JUN and MYB via the leucine zipper regions present in these proteins. Also binds to and represses PPARGC1A: this interaction is abrogated when PPARGC1A is phosphorylated by MAPK1/ERK. Binds to and stimulates transcription by AHR. Binds to KPNA2. Component of the B-WICH complex, at least composed of SMARCA5/SNF2H, BAZ1B/WSTF, SF3B1, DEK, MYO1C, ERCC6, MYBBP1A and DDX21. Interacts with CLOCK and CRY1. Post-translationally, citrullinated by PADI4.

The protein localises to the nucleus. Its subcellular location is the nucleolus. It localises to the cytoplasm. Its function is as follows. May activate or repress transcription via interactions with sequence specific DNA-binding proteins. Repression may be mediated at least in part by histone deacetylase activity (HDAC activity). Acts as a corepressor and in concert with CRY1, represses the transcription of the core circadian clock component PER2. Preferentially binds to dimethylated histone H3 'Lys-9' (H3K9me2) on the PER2 promoter. Has a role in rRNA biogenesis together with PWP1. The chain is Myb-binding protein 1A (Mybbp1a) from Rattus norvegicus (Rat).